A 223-amino-acid polypeptide reads, in one-letter code: DNA mismatch repair protein MutH (223 aa).

The protein belongs to the MutH family.

The protein localises to the cytoplasm. Functionally, sequence-specific endonuclease that cleaves unmethylated GATC sequences. It is involved in DNA mismatch repair. This Shewanella sp. (strain MR-4) protein is DNA mismatch repair protein MutH.